Consider the following 103-residue polypeptide: Histone H4 (103 aa).

The segment covering M1–G14 has biased composition (gly residues). The interval M1–R20 is disordered. Position 6 is an N6-acetyl-N6-methyllysine; alternate (K6). N6-methyllysine; alternate is present on residues K6, K9, and K13. N6-acetyl-N6-methyllysine; alternate is present on K13. The DNA-binding element occupies K17–K21. Position 92 is an N6-glutaryllysine (K92).

It belongs to the histone H4 family. The nucleosome is a histone octamer containing two molecules each of H2A, H2B, H3 and H4 assembled in one H3-H4 heterotetramer and two H2A-H2B heterodimers. The octamer wraps approximately 147 bp of DNA. Post-translationally, glutarylation at Lys-92 (H4K91glu) destabilizes nucleosomes by promoting dissociation of the H2A-H2B dimers from nucleosomes.

It localises to the nucleus. The protein localises to the chromosome. In terms of biological role, core component of nucleosome. Nucleosomes wrap and compact DNA into chromatin, limiting DNA accessibility to the cellular machineries which require DNA as a template. Histones thereby play a central role in transcription regulation, DNA repair, DNA replication and chromosomal stability. DNA accessibility is regulated via a complex set of post-translational modifications of histones, also called histone code, and nucleosome remodeling. In Phanerodontia chrysosporium (White-rot fungus), this protein is Histone H4 (H4.1).